A 38-amino-acid chain; its full sequence is Photosystem II reaction center protein L (38 aa).

The chain crosses the membrane as a helical span at residues 17-37 (SLFWGLLLIFVLAVLFSSYFF).

The protein belongs to the PsbL family. PSII is composed of 1 copy each of membrane proteins PsbA, PsbB, PsbC, PsbD, PsbE, PsbF, PsbH, PsbI, PsbJ, PsbK, PsbL, PsbM, PsbT, PsbX, PsbY, PsbZ, Psb30/Ycf12, at least 3 peripheral proteins of the oxygen-evolving complex and a large number of cofactors. It forms dimeric complexes.

It localises to the plastid. It is found in the chloroplast thylakoid membrane. One of the components of the core complex of photosystem II (PSII). PSII is a light-driven water:plastoquinone oxidoreductase that uses light energy to abstract electrons from H(2)O, generating O(2) and a proton gradient subsequently used for ATP formation. It consists of a core antenna complex that captures photons, and an electron transfer chain that converts photonic excitation into a charge separation. This subunit is found at the monomer-monomer interface and is required for correct PSII assembly and/or dimerization. The sequence is that of Photosystem II reaction center protein L from Zygnema circumcarinatum (Green alga).